The following is a 37-amino-acid chain: Large ribosomal subunit protein bL36 (37 aa).

It belongs to the bacterial ribosomal protein bL36 family.

This is Large ribosomal subunit protein bL36 from Vibrio atlanticus (strain LGP32) (Vibrio splendidus (strain Mel32)).